A 384-amino-acid polypeptide reads, in one-letter code: Bacterial ceramide synthase (384 aa).

The protein resides in the cytoplasm. The catalysed reaction is 3-oxosphinganine + a fatty acyl-CoA = N-acyl-3-oxosphinganine + CoA + H(+). It catalyses the reaction 3-oxosphinganine + tetradecanoyl-CoA = N-tetradecanoyl-3-oxosphinganine + CoA + H(+). The enzyme catalyses 3-oxosphinganine + hexadecanoyl-CoA = N-hexadecanoyl-3-oxosphinganine + CoA + H(+). It carries out the reaction 3-oxosphinganine + (9Z)-hexadecenoyl-CoA = N-(9Z-hexadecenoyl)-3-oxosphinganine + CoA + H(+). The catalysed reaction is 3-oxosphinganine + octanoyl-CoA = N-octanoyl-3-oxosphinganine + CoA + H(+). It catalyses the reaction 3-oxosphinganine + decanoyl-CoA = N-decanoyl-3-oxosphinganine + CoA + H(+). The enzyme catalyses 3-oxosphinganine + dodecanoyl-CoA = N-dodecanoyl-3-oxosphinganine + CoA + H(+). It carries out the reaction 3-oxosphinganine + octadecanoyl-CoA = N-octadecanoyl-3-oxosphinganine + CoA + H(+). The catalysed reaction is 3-oxosphinganine + eicosanoyl-CoA = N-eicosanoyl-3-oxosphinganine + CoA + H(+). It catalyses the reaction 3-oxosphinganine + docosanoyl-CoA = N-docosanoyl-3-ketodihydrosphingosine + CoA + H(+). The enzyme catalyses 3-oxosphinganine + tetracosanoyl-CoA = N-tetracosanoyl-3-oxosphinganine + CoA + H(+). It functions in the pathway lipid metabolism; sphingolipid metabolism. In terms of biological role, involved in de novo bacterial ceramide synthesis. Catalyzes the condensation of 3-oxosphinganine with an acyl-CoA to generate oxidized ceramides. Can use acyl-CoA substrates ranging from C8 to C24, with highest in vitro activity with C14 and very little activity with acyl-CoA thioesters of 18 carbons or longer. May have a preference for monounsaturated acyl-CoA substrates, as it has a threefold greater preference for C16:1-CoA over C16:0-CoA as a substrate in vitro. In Caulobacter vibrioides (strain NA1000 / CB15N) (Caulobacter crescentus), this protein is Bacterial ceramide synthase.